The sequence spans 562 residues: Phosphoglucomutase-1 (562 aa).

The residue at position 1 (Met1) is an N-acetylmethionine. Lys16 carries the post-translational modification N6-acetyllysine. Arg23 is an alpha-D-glucose 1,6-bisphosphate binding site. Thr115 bears the Phosphothreonine mark. Ser117 serves as a coordination point for alpha-D-glucose 1,6-bisphosphate. Residue Ser117 is the Phosphoserine intermediate of the active site. Position 117 (Ser117) interacts with Mg(2+). Phosphoserine occurs at positions 117 and 134. The residue at position 185 (Thr185) is a Phosphothreonine. Residue Ser213 is modified to Phosphoserine. Mg(2+) is bound by residues Asp288, Asp290, and Asp292. Asp292 and Arg293 together coordinate alpha-D-glucose 1,6-bisphosphate. Lys349 carries the N6-acetyllysine modification. Tyr353 carries the phosphotyrosine modification. Residue Thr357 coordinates alpha-D-glucose 1,6-bisphosphate. Position 369 is a phosphoserine (Ser369). Residues Glu376, Ser378, and Lys389 each contribute to the alpha-D-glucose 1,6-bisphosphate site. Phosphoserine is present on Ser378. Lys419 carries the N6-succinyllysine modification. At Thr467 the chain carries Phosphothreonine; by PAK1. A phosphoserine mark is found at Ser485 and Ser505. Thr507 is subject to Phosphothreonine. A phosphoserine mark is found at Ser509 and Ser541.

This sequence belongs to the phosphohexose mutase family. In terms of assembly, monomer. Mg(2+) serves as cofactor. Isoform 2 is the major calmodulin-dependent phosphoprotein in junctional skeletal sarcoplasmic reticulum vesicles. In terms of processing, phosphorylation at Thr-467 by PAK1 significantly enhances enzymatic activity.

It is found in the cytoplasm. Its subcellular location is the sarcoplasmic reticulum. It catalyses the reaction alpha-D-glucose 1-phosphate = alpha-D-glucose 6-phosphate. The enzyme catalyses O-phospho-L-seryl-[protein] + alpha-D-glucose 1-phosphate = alpha-D-glucose 1,6-bisphosphate + L-seryl-[protein]. The catalysed reaction is alpha-D-glucose 1,6-bisphosphate + L-seryl-[protein] = O-phospho-L-seryl-[protein] + alpha-D-glucose 6-phosphate. Its activity is regulated as follows. Glucose-1,6-bisphosphate enhances phosphorylation of the active site Ser-117, and thereby increases enzyme activity. Catalyzes the reversible isomerization of alpha-D-glucose 1-phosphate to alpha-D-glucose 6-phosphate. The mechanism proceeds via the intermediate compound alpha-D-glucose 1,6-bisphosphate. This enzyme participates in both the breakdown and synthesis of glucose. This Oryctolagus cuniculus (Rabbit) protein is Phosphoglucomutase-1 (PGM1).